Here is a 92-residue protein sequence, read N- to C-terminus: MSTRRQAITLYRNLLRESEKLPSYNFRMYAARKIRDTFRANRSTRDFAEIDRQMAEGQQNLELIRRQVIIGHLYSADKLVIENKKTLKPSDD.

A coiled-coil region spans residues 48 to 68 (AEIDRQMAEGQQNLELIRRQV).

The protein belongs to the complex I LYR family. In terms of assembly, component of the mitochondrial core iron-sulfur cluster (ISC) assembly complex at least composed of the cysteine desulfurase Nfs1, the scaffold protein IscU, the accessory protein bcn92/Isd11/Lyrm4, and probably fh/frataxin. Interacts with Nfs1.

It localises to the mitochondrion. Its function is as follows. Stabilizing factor of the core iron-sulfur cluster (ISC) assembly complex that regulates the stability and cysteine desulfurase activity of Nfs1 and participates in the [2Fe-2S] clusters assembly on the scaffolding protein IscU. In Drosophila melanogaster (Fruit fly), this protein is LYR motif-containing protein 4 homolog.